The following is a 177-amino-acid chain: Large ribosomal subunit protein uL6 (177 aa).

It belongs to the universal ribosomal protein uL6 family. Part of the 50S ribosomal subunit.

In terms of biological role, this protein binds to the 23S rRNA, and is important in its secondary structure. It is located near the subunit interface in the base of the L7/L12 stalk, and near the tRNA binding site of the peptidyltransferase center. The chain is Large ribosomal subunit protein uL6 from Ralstonia pickettii (strain 12J).